Consider the following 452-residue polypeptide: tRNA modification GTPase MnmE (452 aa).

(6S)-5-formyl-5,6,7,8-tetrahydrofolate-binding residues include arginine 21, glutamate 78, and lysine 118. Positions 214–375 (GMKVVIAGRP…LREHLKQAMG (162 aa)) constitute a TrmE-type G domain. A K(+)-binding site is contributed by asparagine 224. GTP-binding positions include 224 to 229 (NAGKSS), 243 to 249 (TDIAGTT), and 268 to 271 (DTAG). Serine 228 contacts Mg(2+). Positions 243, 245, and 248 each coordinate K(+). Residue threonine 249 participates in Mg(2+) binding. Lysine 452 provides a ligand contact to (6S)-5-formyl-5,6,7,8-tetrahydrofolate.

This sequence belongs to the TRAFAC class TrmE-Era-EngA-EngB-Septin-like GTPase superfamily. TrmE GTPase family. Homodimer. Heterotetramer of two MnmE and two MnmG subunits. K(+) is required as a cofactor.

The protein localises to the cytoplasm. Exhibits a very high intrinsic GTPase hydrolysis rate. Involved in the addition of a carboxymethylaminomethyl (cmnm) group at the wobble position (U34) of certain tRNAs, forming tRNA-cmnm(5)s(2)U34. This chain is tRNA modification GTPase MnmE, found in Haemophilus influenzae (strain ATCC 51907 / DSM 11121 / KW20 / Rd).